The primary structure comprises 159 residues: UPF0587 protein v1g245604 (159 aa).

Cys-33, Cys-36, Cys-67, and Cys-70 together coordinate Zn(2+).

Belongs to the UPF0587 family.

This chain is UPF0587 protein v1g245604, found in Nematostella vectensis (Starlet sea anemone).